Reading from the N-terminus, the 174-residue chain is ATP synthase subunit b (174 aa).

A helical transmembrane segment spans residues 9–29 (LPNTSLIFWEVVTFLILLALL).

Belongs to the ATPase B chain family. In terms of assembly, F-type ATPases have 2 components, F(1) - the catalytic core - and F(0) - the membrane proton channel. F(1) has five subunits: alpha(3), beta(3), gamma(1), delta(1), epsilon(1). F(0) has three main subunits: a(1), b(2) and c(10-14). The alpha and beta chains form an alternating ring which encloses part of the gamma chain. F(1) is attached to F(0) by a central stalk formed by the gamma and epsilon chains, while a peripheral stalk is formed by the delta and b chains.

Its subcellular location is the cell membrane. Functionally, f(1)F(0) ATP synthase produces ATP from ADP in the presence of a proton or sodium gradient. F-type ATPases consist of two structural domains, F(1) containing the extramembraneous catalytic core and F(0) containing the membrane proton channel, linked together by a central stalk and a peripheral stalk. During catalysis, ATP synthesis in the catalytic domain of F(1) is coupled via a rotary mechanism of the central stalk subunits to proton translocation. Component of the F(0) channel, it forms part of the peripheral stalk, linking F(1) to F(0). The polypeptide is ATP synthase subunit b (Rubrobacter xylanophilus (strain DSM 9941 / JCM 11954 / NBRC 16129 / PRD-1)).